A 572-amino-acid polypeptide reads, in one-letter code: Dihydroxy-acid dehydratase (572 aa).

[2Fe-2S] cluster is bound at residue cysteine 57. Position 89 (aspartate 89) interacts with Mg(2+). Cysteine 130 contacts [2Fe-2S] cluster. Mg(2+) is bound by residues aspartate 131 and lysine 132. At lysine 132 the chain carries N6-carboxylysine. Cysteine 202 contacts [2Fe-2S] cluster. Glutamate 453 is a binding site for Mg(2+). Serine 479 functions as the Proton acceptor in the catalytic mechanism.

Belongs to the IlvD/Edd family. In terms of assembly, homodimer. The cofactor is [2Fe-2S] cluster. It depends on Mg(2+) as a cofactor.

It catalyses the reaction (2R)-2,3-dihydroxy-3-methylbutanoate = 3-methyl-2-oxobutanoate + H2O. The enzyme catalyses (2R,3R)-2,3-dihydroxy-3-methylpentanoate = (S)-3-methyl-2-oxopentanoate + H2O. It participates in amino-acid biosynthesis; L-isoleucine biosynthesis; L-isoleucine from 2-oxobutanoate: step 3/4. Its pathway is amino-acid biosynthesis; L-valine biosynthesis; L-valine from pyruvate: step 3/4. In terms of biological role, functions in the biosynthesis of branched-chain amino acids. Catalyzes the dehydration of (2R,3R)-2,3-dihydroxy-3-methylpentanoate (2,3-dihydroxy-3-methylvalerate) into 2-oxo-3-methylpentanoate (2-oxo-3-methylvalerate) and of (2R)-2,3-dihydroxy-3-methylbutanoate (2,3-dihydroxyisovalerate) into 2-oxo-3-methylbutanoate (2-oxoisovalerate), the penultimate precursor to L-isoleucine and L-valine, respectively. The chain is Dihydroxy-acid dehydratase from Streptococcus sanguinis (strain SK36).